A 632-amino-acid chain; its full sequence is tRNA uridine 5-carboxymethylaminomethyl modification enzyme MnmG (632 aa).

FAD contacts are provided by residues 15–20, valine 127, and serine 182; that span reads GAGHAG. A disordered region spans residues 203–226; the sequence is TPPRVKSSTIDYSKTEEQPGDDHP. Residues 215–226 show a composition bias toward basic and acidic residues; sequence SKTEEQPGDDHP. Residue 274-288 coordinates NAD(+); sequence GARYCPSIEDKIVRF. FAD is bound at residue glutamine 371.

It belongs to the MnmG family. In terms of assembly, homodimer. Heterotetramer of two MnmE and two MnmG subunits. The cofactor is FAD.

The protein localises to the cytoplasm. In terms of biological role, NAD-binding protein involved in the addition of a carboxymethylaminomethyl (cmnm) group at the wobble position (U34) of certain tRNAs, forming tRNA-cmnm(5)s(2)U34. This Listeria monocytogenes serotype 4b (strain F2365) protein is tRNA uridine 5-carboxymethylaminomethyl modification enzyme MnmG.